We begin with the raw amino-acid sequence, 732 residues long: Ferric aerobactin receptor (732 aa).

The signal sequence occupies residues 1-25; sequence MMISKKYTLWALNPLLLTMMAPAVA. Residues 31 to 38 carry the TonB box motif; sequence ETFVVSAN. The TBDR plug domain occupies 43-153; sequence TVAEMAQTTW…TGGLINIVTK (111 aa). Residues 158–732 form the TBDR beta-barrel domain; sequence ETMMEFEAGT…TFGLNYSVLF (575 aa). The TonB C-terminal box signature appears at 715 to 732; sequence YDYKGRGRTFGLNYSVLF.

The protein belongs to the TonB-dependent receptor family.

It localises to the cell outer membrane. Functionally, receptor for cloacin DF13/aerobactin. This is Ferric aerobactin receptor (iutA) from Escherichia coli.